A 397-amino-acid polypeptide reads, in one-letter code: G2/mitotic-specific cyclin-B1 (397 aa).

It belongs to the cyclin family. Cyclin AB subfamily. As to quaternary structure, interacts with the cdc2 protein kinase to form a serine/threonine kinase holoenzyme complex also known as maturation promoting factor (MPF). The cyclin subunit imparts substrate specificity to the complex. When not in a complex with cdc2, interacts with spdya. Interacts with nap1l1. Interacts with nanos1.

It is found in the cytoplasm. The protein localises to the cytoskeleton. The protein resides in the microtubule organizing center. Its subcellular location is the centrosome. It localises to the nucleus. Its function is as follows. Essential for the control of the cell cycle at the G2/M (mitosis) transition. The protein is G2/mitotic-specific cyclin-B1 (ccnb1) of Xenopus laevis (African clawed frog).